The primary structure comprises 103 residues: Large ribosomal subunit protein bL21 (103 aa).

It belongs to the bacterial ribosomal protein bL21 family. As to quaternary structure, part of the 50S ribosomal subunit. Contacts protein L20.

Functionally, this protein binds to 23S rRNA in the presence of protein L20. The sequence is that of Large ribosomal subunit protein bL21 from Salmonella agona (strain SL483).